A 288-amino-acid chain; its full sequence is ATP synthase gamma chain (288 aa).

The protein belongs to the ATPase gamma chain family. As to quaternary structure, F-type ATPases have 2 components, CF(1) - the catalytic core - and CF(0) - the membrane proton channel. CF(1) has five subunits: alpha(3), beta(3), gamma(1), delta(1), epsilon(1). CF(0) has three main subunits: a, b and c.

It localises to the cell inner membrane. Its function is as follows. Produces ATP from ADP in the presence of a proton gradient across the membrane. The gamma chain is believed to be important in regulating ATPase activity and the flow of protons through the CF(0) complex. This is ATP synthase gamma chain from Blochmanniella pennsylvanica (strain BPEN).